The following is a 297-amino-acid chain: HTH-type transcriptional regulator ArgP (297 aa).

The HTH lysR-type domain occupies 4-60; sequence PDYRTLQALDAVIRERGFERAAQKLCITQSAVSQRIKQLENMFGQPLLVRTVPPRPT. The H-T-H motif DNA-binding region spans 21–40; the sequence is FERAAQKLCITQSAVSQRIK.

The protein belongs to the LysR transcriptional regulatory family. As to quaternary structure, homodimer.

In terms of biological role, controls the transcription of genes involved in arginine and lysine metabolism. This is HTH-type transcriptional regulator ArgP from Citrobacter koseri (strain ATCC BAA-895 / CDC 4225-83 / SGSC4696).